A 306-amino-acid polypeptide reads, in one-letter code: Homoserine O-acetyltransferase (306 aa).

Cys-142 functions as the Acyl-thioester intermediate in the catalytic mechanism. Residues Lys-163 and Ser-192 each contribute to the substrate site. The Proton acceptor role is filled by His-235. Residue Glu-237 is part of the active site. Arg-249 lines the substrate pocket.

Belongs to the MetA family.

It localises to the cytoplasm. The enzyme catalyses L-homoserine + acetyl-CoA = O-acetyl-L-homoserine + CoA. Its pathway is amino-acid biosynthesis; L-methionine biosynthesis via de novo pathway; O-acetyl-L-homoserine from L-homoserine: step 1/1. In terms of biological role, transfers an acetyl group from acetyl-CoA to L-homoserine, forming acetyl-L-homoserine. The sequence is that of Homoserine O-acetyltransferase from Clostridium botulinum (strain Eklund 17B / Type B).